The primary structure comprises 81 residues: Exodeoxyribonuclease 7 small subunit (81 aa).

A compositionally biased stretch (basic and acidic residues) spans 60–70 (LVDKDGNEKAL). The disordered stretch occupies residues 60 to 81 (LVDKDGNEKALDPQNASAPEEE).

This sequence belongs to the XseB family. In terms of assembly, heterooligomer composed of large and small subunits.

Its subcellular location is the cytoplasm. It carries out the reaction Exonucleolytic cleavage in either 5'- to 3'- or 3'- to 5'-direction to yield nucleoside 5'-phosphates.. Its function is as follows. Bidirectionally degrades single-stranded DNA into large acid-insoluble oligonucleotides, which are then degraded further into small acid-soluble oligonucleotides. In Lactobacillus johnsonii (strain CNCM I-12250 / La1 / NCC 533), this protein is Exodeoxyribonuclease 7 small subunit.